A 142-amino-acid polypeptide reads, in one-letter code: Deoxyuridine 5'-triphosphate nucleotidohydrolase (142 aa).

Substrate contacts are provided by residues 62–64 (RSG), Asn75, and 79–81 (TID).

The protein belongs to the dUTPase family. Mg(2+) is required as a cofactor.

The catalysed reaction is dUTP + H2O = dUMP + diphosphate + H(+). The protein operates within pyrimidine metabolism; dUMP biosynthesis; dUMP from dCTP (dUTP route): step 2/2. In terms of biological role, this enzyme is involved in nucleotide metabolism: it produces dUMP, the immediate precursor of thymidine nucleotides and it decreases the intracellular concentration of dUTP so that uracil cannot be incorporated into DNA. The chain is Deoxyuridine 5'-triphosphate nucleotidohydrolase from Clostridium novyi (strain NT).